Consider the following 206-residue polypeptide: Ribosomal RNA large subunit methyltransferase E (206 aa).

Positions 60, 62, 80, 96, and 121 each coordinate S-adenosyl-L-methionine. The active-site Proton acceptor is the K161.

The protein belongs to the class I-like SAM-binding methyltransferase superfamily. RNA methyltransferase RlmE family.

Its subcellular location is the cytoplasm. It catalyses the reaction uridine(2552) in 23S rRNA + S-adenosyl-L-methionine = 2'-O-methyluridine(2552) in 23S rRNA + S-adenosyl-L-homocysteine + H(+). Its function is as follows. Specifically methylates the uridine in position 2552 of 23S rRNA at the 2'-O position of the ribose in the fully assembled 50S ribosomal subunit. The protein is Ribosomal RNA large subunit methyltransferase E of Hydrogenovibrio crunogenus (strain DSM 25203 / XCL-2) (Thiomicrospira crunogena).